Consider the following 229-residue polypeptide: Endonuclease V (229 aa).

It belongs to the endonuclease V family.

The protein resides in the cytoplasm. The catalysed reaction is Endonucleolytic cleavage at apurinic or apyrimidinic sites to products with a 5'-phosphate.. DNA repair enzyme involved in the repair of deaminated bases. Selectively cleaves double-stranded DNA at the second phosphodiester bond 3' to a deoxyinosine leaving behind the intact lesion on the nicked DNA. This chain is Endonuclease V, found in Methanopyrus kandleri (strain AV19 / DSM 6324 / JCM 9639 / NBRC 100938).